Reading from the N-terminus, the 194-residue chain is Recombination protein RecR (194 aa).

A C4-type zinc finger spans residues 52-67; it reads CTECRTFTEEEVCHIC. A Toprim domain is found at 76–171; that stretch reads GQICVVESPA…EASRIAHGVP (96 aa).

This sequence belongs to the RecR family.

Its function is as follows. May play a role in DNA repair. It seems to be involved in an RecBC-independent recombinational process of DNA repair. It may act with RecF and RecO. The chain is Recombination protein RecR from Vibrio campbellii (strain ATCC BAA-1116).